A 122-amino-acid chain; its full sequence is Basic phospholipase A2 PL-X (122 aa).

Disulfide bonds link Cys26/Cys115, Cys28/Cys44, Cys43/Cys95, Cys49/Cys122, Cys50/Cys88, Cys57/Cys81, and Cys75/Cys86. 3 residues coordinate Ca(2+): Tyr27, Gly29, and Gly31. His47 is a catalytic residue. Ca(2+) is bound at residue Asp48. The active site involves Asp89.

This sequence belongs to the phospholipase A2 family. Group II subfamily. D49 sub-subfamily. Requires Ca(2+) as cofactor. In terms of tissue distribution, expressed by the venom gland.

Its subcellular location is the secreted. It carries out the reaction a 1,2-diacyl-sn-glycero-3-phosphocholine + H2O = a 1-acyl-sn-glycero-3-phosphocholine + a fatty acid + H(+). PLA2 catalyzes the calcium-dependent hydrolysis of the 2-acyl groups in 3-sn-phosphoglycerides. The protein is Basic phospholipase A2 PL-X of Protobothrops flavoviridis (Habu).